A 286-amino-acid chain; its full sequence is 33 kDa chaperonin (286 aa).

2 disulfides stabilise this stretch: cysteine 225–cysteine 227 and cysteine 258–cysteine 261.

The protein belongs to the HSP33 family. In terms of processing, under oxidizing conditions two disulfide bonds are formed involving the reactive cysteines. Under reducing conditions zinc is bound to the reactive cysteines and the protein is inactive.

Its subcellular location is the cytoplasm. Its function is as follows. Redox regulated molecular chaperone. Protects both thermally unfolding and oxidatively damaged proteins from irreversible aggregation. Plays an important role in the bacterial defense system toward oxidative stress. This Shewanella oneidensis (strain ATCC 700550 / JCM 31522 / CIP 106686 / LMG 19005 / NCIMB 14063 / MR-1) protein is 33 kDa chaperonin.